Reading from the N-terminus, the 382-residue chain is Mannitol-1-phosphate 5-dehydrogenase (382 aa).

Ala3–Gly14 contributes to the NAD(+) binding site. Lys269 bears the N6-acetyllysine mark.

The protein belongs to the mannitol dehydrogenase family.

The catalysed reaction is D-mannitol 1-phosphate + NAD(+) = beta-D-fructose 6-phosphate + NADH + H(+). In Shigella boydii serotype 18 (strain CDC 3083-94 / BS512), this protein is Mannitol-1-phosphate 5-dehydrogenase.